A 371-amino-acid polypeptide reads, in one-letter code: uncharacterized protein (371 aa).

A coiled-coil region spans residues 287 to 323 (EVVTALDRYRQHLRETRERLEEKQGKLLEELKGYESM).

This is an uncharacterized protein from Aspergillus fumigatus (strain ATCC MYA-4609 / CBS 101355 / FGSC A1100 / Af293) (Neosartorya fumigata).